The primary structure comprises 325 residues: ATP phosphoribosyltransferase (325 aa).

The protein belongs to the ATP phosphoribosyltransferase family. Long subfamily. Mg(2+) serves as cofactor.

Its subcellular location is the cytoplasm. It carries out the reaction 1-(5-phospho-beta-D-ribosyl)-ATP + diphosphate = 5-phospho-alpha-D-ribose 1-diphosphate + ATP. It functions in the pathway amino-acid biosynthesis; L-histidine biosynthesis; L-histidine from 5-phospho-alpha-D-ribose 1-diphosphate: step 1/9. Its activity is regulated as follows. Feedback inhibited by histidine. In terms of biological role, catalyzes the condensation of ATP and 5-phosphoribose 1-diphosphate to form N'-(5'-phosphoribosyl)-ATP (PR-ATP). Has a crucial role in the pathway because the rate of histidine biosynthesis seems to be controlled primarily by regulation of HisG enzymatic activity. This chain is ATP phosphoribosyltransferase, found in Bradyrhizobium sp. (strain ORS 278).